Here is a 469-residue protein sequence, read N- to C-terminus: 3-isopropylmalate dehydratase large subunit (469 aa).

[4Fe-4S] cluster-binding residues include Cys-350, Cys-410, and Cys-413.

It belongs to the aconitase/IPM isomerase family. LeuC type 1 subfamily. Heterodimer of LeuC and LeuD. [4Fe-4S] cluster serves as cofactor.

It catalyses the reaction (2R,3S)-3-isopropylmalate = (2S)-2-isopropylmalate. It functions in the pathway amino-acid biosynthesis; L-leucine biosynthesis; L-leucine from 3-methyl-2-oxobutanoate: step 2/4. Its function is as follows. Catalyzes the isomerization between 2-isopropylmalate and 3-isopropylmalate, via the formation of 2-isopropylmaleate. This Sinorhizobium fredii (strain NBRC 101917 / NGR234) protein is 3-isopropylmalate dehydratase large subunit.